Reading from the N-terminus, the 269-residue chain is Putative hydro-lyase M446_2125 (269 aa).

This sequence belongs to the D-glutamate cyclase family.

The chain is Putative hydro-lyase M446_2125 from Methylobacterium sp. (strain 4-46).